The chain runs to 224 residues: 7-cyano-7-deazaguanine synthase (224 aa).

8 to 18 (CSGGLDSTVAA) contacts ATP. Zn(2+)-binding residues include Cys-190, Cys-198, Cys-201, and Cys-204.

It belongs to the QueC family. Requires Zn(2+) as cofactor.

It catalyses the reaction 7-carboxy-7-deazaguanine + NH4(+) + ATP = 7-cyano-7-deazaguanine + ADP + phosphate + H2O + H(+). The protein operates within purine metabolism; 7-cyano-7-deazaguanine biosynthesis. In terms of biological role, catalyzes the ATP-dependent conversion of 7-carboxy-7-deazaguanine (CDG) to 7-cyano-7-deazaguanine (preQ(0)). In Methanothrix thermoacetophila (strain DSM 6194 / JCM 14653 / NBRC 101360 / PT) (Methanosaeta thermophila), this protein is 7-cyano-7-deazaguanine synthase.